The following is a 311-amino-acid chain: tRNA(Ile)-lysidine synthase (311 aa).

31 to 36 (SGGKDS) is a binding site for ATP.

It belongs to the tRNA(Ile)-lysidine synthase family.

Its subcellular location is the cytoplasm. It carries out the reaction cytidine(34) in tRNA(Ile2) + L-lysine + ATP = lysidine(34) in tRNA(Ile2) + AMP + diphosphate + H(+). Functionally, ligates lysine onto the cytidine present at position 34 of the AUA codon-specific tRNA(Ile) that contains the anticodon CAU, in an ATP-dependent manner. Cytidine is converted to lysidine, thus changing the amino acid specificity of the tRNA from methionine to isoleucine. This Petrotoga mobilis (strain DSM 10674 / SJ95) protein is tRNA(Ile)-lysidine synthase.